An 86-amino-acid polypeptide reads, in one-letter code: Large ribosomal subunit protein bL27 (86 aa).

Positions 1 to 24 (MAHKKAMGSTENTRDSNPSYLGVK) are disordered. A compositionally biased stretch (polar residues) spans 9-19 (STENTRDSNPS).

It belongs to the bacterial ribosomal protein bL27 family.

The protein is Large ribosomal subunit protein bL27 of Salinibacter ruber (strain DSM 13855 / M31).